A 445-amino-acid polypeptide reads, in one-letter code: Probable glycine dehydrogenase (decarboxylating) subunit 1 (445 aa).

Belongs to the GcvP family. N-terminal subunit subfamily. The glycine cleavage system is composed of four proteins: P, T, L and H. In this organism, the P 'protein' is a heterodimer of two subunits.

It carries out the reaction N(6)-[(R)-lipoyl]-L-lysyl-[glycine-cleavage complex H protein] + glycine + H(+) = N(6)-[(R)-S(8)-aminomethyldihydrolipoyl]-L-lysyl-[glycine-cleavage complex H protein] + CO2. Functionally, the glycine cleavage system catalyzes the degradation of glycine. The P protein binds the alpha-amino group of glycine through its pyridoxal phosphate cofactor; CO(2) is released and the remaining methylamine moiety is then transferred to the lipoamide cofactor of the H protein. The chain is Probable glycine dehydrogenase (decarboxylating) subunit 1 from Citrifermentans bemidjiense (strain ATCC BAA-1014 / DSM 16622 / JCM 12645 / Bem) (Geobacter bemidjiensis).